The following is a 543-amino-acid chain: CTP synthase (543 aa).

The tract at residues 1-265 is amidoligase domain; that stretch reads MARYIFITGG…DDEVLAAFGI (265 aa). CTP is bound at residue serine 13. Serine 13 contributes to the UTP binding site. Position 14-19 (14-19) interacts with ATP; sequence SLGKGL. Residue tyrosine 54 participates in L-glutamine binding. Aspartate 71 is an ATP binding site. Positions 71 and 139 each coordinate Mg(2+). Residues 146 to 148, 186 to 191, and lysine 222 each bind CTP; these read DIE and KTKPTQ. UTP is bound by residues 186 to 191 and lysine 222; that span reads KTKPTQ. 238–240 contributes to the ATP binding site; sequence RDV. Residues 291-542 enclose the Glutamine amidotransferase type-1 domain; the sequence is TIAIVGKYTG…IQAAMVQSRL (252 aa). L-glutamine is bound at residue glycine 353. The active-site Nucleophile; for glutamine hydrolysis is the cysteine 380. L-glutamine-binding positions include 381–384, glutamate 404, and arginine 470; that span reads FGMQ. Residues histidine 515 and glutamate 517 contribute to the active site.

This sequence belongs to the CTP synthase family. Homotetramer.

The enzyme catalyses UTP + L-glutamine + ATP + H2O = CTP + L-glutamate + ADP + phosphate + 2 H(+). It carries out the reaction L-glutamine + H2O = L-glutamate + NH4(+). It catalyses the reaction UTP + NH4(+) + ATP = CTP + ADP + phosphate + 2 H(+). The protein operates within pyrimidine metabolism; CTP biosynthesis via de novo pathway; CTP from UDP: step 2/2. Its activity is regulated as follows. Allosterically activated by GTP, when glutamine is the substrate; GTP has no effect on the reaction when ammonia is the substrate. The allosteric effector GTP functions by stabilizing the protein conformation that binds the tetrahedral intermediate(s) formed during glutamine hydrolysis. Inhibited by the product CTP, via allosteric rather than competitive inhibition. Functionally, catalyzes the ATP-dependent amination of UTP to CTP with either L-glutamine or ammonia as the source of nitrogen. Regulates intracellular CTP levels through interactions with the four ribonucleotide triphosphates. In Bradyrhizobium diazoefficiens (strain JCM 10833 / BCRC 13528 / IAM 13628 / NBRC 14792 / USDA 110), this protein is CTP synthase.